The primary structure comprises 332 residues: GTP 3',8-cyclase (332 aa).

The region spanning Gln7–Asp221 is the Radical SAM core domain. Arg16 contributes to the GTP binding site. Positions 23 and 27 each coordinate [4Fe-4S] cluster. Tyr29 lines the S-adenosyl-L-methionine pocket. Cys30 serves as a coordination point for [4Fe-4S] cluster. Arg66 lines the GTP pocket. Gly70 lines the S-adenosyl-L-methionine pocket. Position 97 (Thr97) interacts with GTP. Ser121 is an S-adenosyl-L-methionine binding site. Lys158 contributes to the GTP binding site. Residue Met192 participates in S-adenosyl-L-methionine binding. [4Fe-4S] cluster is bound by residues Cys256 and Cys259. Residue Arg261–Arg263 participates in GTP binding. Residue Cys273 coordinates [4Fe-4S] cluster.

This sequence belongs to the radical SAM superfamily. MoaA family. In terms of assembly, monomer and homodimer. The cofactor is [4Fe-4S] cluster.

The catalysed reaction is GTP + AH2 + S-adenosyl-L-methionine = (8S)-3',8-cyclo-7,8-dihydroguanosine 5'-triphosphate + 5'-deoxyadenosine + L-methionine + A + H(+). The protein operates within cofactor biosynthesis; molybdopterin biosynthesis. Catalyzes the cyclization of GTP to (8S)-3',8-cyclo-7,8-dihydroguanosine 5'-triphosphate. The chain is GTP 3',8-cyclase from Limosilactobacillus fermentum (strain NBRC 3956 / LMG 18251) (Lactobacillus fermentum).